A 136-amino-acid chain; its full sequence is MIKFLLFLAIAAATVISNAELAVPTASISAHVLDISGGSPAGGIQILAFILLNNGWTNIGSQFTQDNGRVDWVSPDFTLIPGTYRLVYITEPYYTAKNVESFYPYVEVVFNIRNATQHYHVPLTLSPWGYSTYRGS.

A signal peptide spans 1–19; it reads MIKFLLFLAIAAATVISNA. Substrate is bound by residues His-31, Arg-69, and Tyr-133.

The protein belongs to the transthyretin family. 5-hydroxyisourate hydrolase subfamily. Homotetramer.

It carries out the reaction 5-hydroxyisourate + H2O = 5-hydroxy-2-oxo-4-ureido-2,5-dihydro-1H-imidazole-5-carboxylate + H(+). Its function is as follows. Catalyzes the hydrolysis of 5-hydroxyisourate (HIU) to 2-oxo-4-hydroxy-4-carboxy-5-ureidoimidazoline (OHCU). The sequence is that of Probable 5-hydroxyisourate hydrolase ZK697.8 from Caenorhabditis elegans.